The chain runs to 265 residues: Aquaporin-5 (265 aa).

Residues M1–K12 lie on the Cytoplasmic side of the membrane. Residues A13–L33 traverse the membrane as a helical segment. At K34–M39 the chain is on the extracellular side. A helical transmembrane segment spans residues P40–L60. The Cytoplasmic portion of the chain corresponds to G61–G65. Residues G66–L74 constitute an intramembrane region (discontinuously helical). Positions N69 to A71 match the NPA 1 motif. The Cytoplasmic segment spans residues A75–A87. Residues V88–L108 traverse the membrane as a helical segment. Topologically, residues A109–T126 are extracellular. N124 and N125 each carry an N-linked (GlcNAc...) asparagine glycan. The helical transmembrane segment at T127 to F147 threads the bilayer. At S148–V158 the chain is on the cytoplasmic side. A helical transmembrane segment spans residues G159 to F179. Position 180 (T180) is a topological domain, extracellular. Positions G181–G191 form an intramembrane region, discontinuously helical. The NPA 2 motif lies at N185 to A187. Residues P192–H203 are Extracellular-facing. Residues W204–L224 traverse the membrane as a helical segment. The Cytoplasmic portion of the chain corresponds to L225–H265.

This sequence belongs to the MIP/aquaporin (TC 1.A.8) family. In terms of assembly, homotetramer; each monomer provides an independent water pore. Interacts with TRPV4; the interaction is probably indirect and regulates TRPV4 activation by hypotonicity.

It localises to the apical cell membrane. The protein localises to the cell membrane. It is found in the cytoplasmic vesicle membrane. The catalysed reaction is H2O(in) = H2O(out). Its function is as follows. Aquaporins form homotetrameric transmembrane channels, with each monomer independently mediating water transport across the plasma membrane along its osmotic gradient. Plays an important role in fluid secretion in salivary glands. Required for TRPV4 activation by hypotonicity. Together with TRPV4, controls regulatory volume decrease in salivary epithelial cells. Seems to play a redundant role in water transport in the eye, lung and in sweat glands. This chain is Aquaporin-5, found in Ovis aries (Sheep).